The sequence spans 72 residues: DNA-directed RNA polymerase subunit Rpo10 (72 aa).

Residues cysteine 7, cysteine 10, cysteine 54, and cysteine 55 each contribute to the Zn(2+) site.

Belongs to the archaeal Rpo10/eukaryotic RPB10 RNA polymerase subunit family. In terms of assembly, part of the RNA polymerase complex. Zn(2+) is required as a cofactor.

The protein localises to the cytoplasm. It catalyses the reaction RNA(n) + a ribonucleoside 5'-triphosphate = RNA(n+1) + diphosphate. DNA-dependent RNA polymerase (RNAP) catalyzes the transcription of DNA into RNA using the four ribonucleoside triphosphates as substrates. This chain is DNA-directed RNA polymerase subunit Rpo10, found in Picrophilus torridus (strain ATCC 700027 / DSM 9790 / JCM 10055 / NBRC 100828 / KAW 2/3).